Here is a 232-residue protein sequence, read N- to C-terminus: Phosphoribosylformylglycinamidine synthase subunit PurQ (232 aa).

The 231-residue stretch at 2 to 232 folds into the Glutamine amidotransferase type-1 domain; the sequence is RIGVITFPGS…SVVRSTLVEA (231 aa). Cysteine 85 (nucleophile) is an active-site residue. Residues histidine 194 and glutamate 196 contribute to the active site.

In terms of assembly, part of the FGAM synthase complex composed of 1 PurL, 1 PurQ and 2 PurS subunits.

Its subcellular location is the cytoplasm. It catalyses the reaction N(2)-formyl-N(1)-(5-phospho-beta-D-ribosyl)glycinamide + L-glutamine + ATP + H2O = 2-formamido-N(1)-(5-O-phospho-beta-D-ribosyl)acetamidine + L-glutamate + ADP + phosphate + H(+). It carries out the reaction L-glutamine + H2O = L-glutamate + NH4(+). The protein operates within purine metabolism; IMP biosynthesis via de novo pathway; 5-amino-1-(5-phospho-D-ribosyl)imidazole from N(2)-formyl-N(1)-(5-phospho-D-ribosyl)glycinamide: step 1/2. Part of the phosphoribosylformylglycinamidine synthase complex involved in the purines biosynthetic pathway. Catalyzes the ATP-dependent conversion of formylglycinamide ribonucleotide (FGAR) and glutamine to yield formylglycinamidine ribonucleotide (FGAM) and glutamate. The FGAM synthase complex is composed of three subunits. PurQ produces an ammonia molecule by converting glutamine to glutamate. PurL transfers the ammonia molecule to FGAR to form FGAM in an ATP-dependent manner. PurS interacts with PurQ and PurL and is thought to assist in the transfer of the ammonia molecule from PurQ to PurL. In Leifsonia xyli subsp. xyli (strain CTCB07), this protein is Phosphoribosylformylglycinamidine synthase subunit PurQ.